The chain runs to 266 residues: Glucosamine-6-phosphate deaminase (266 aa).

Residue Asp-72 is the Proton acceptor; for enolization step of the active site. The active-site For ring-opening step is the Asp-141. Catalysis depends on His-143, which acts as the Proton acceptor; for ring-opening step. Catalysis depends on Glu-148, which acts as the For ring-opening step.

This sequence belongs to the glucosamine/galactosamine-6-phosphate isomerase family. NagB subfamily. In terms of assembly, homohexamer; trimer of disulfide-linked dimers.

It catalyses the reaction alpha-D-glucosamine 6-phosphate + H2O = beta-D-fructose 6-phosphate + NH4(+). It participates in amino-sugar metabolism; N-acetylneuraminate degradation; D-fructose 6-phosphate from N-acetylneuraminate: step 5/5. With respect to regulation, allosterically activated by N-acetylglucosamine 6-phosphate (GlcNAc6P). Functionally, catalyzes the reversible isomerization-deamination of glucosamine 6-phosphate (GlcN6P) to form fructose 6-phosphate (Fru6P) and ammonium ion. The polypeptide is Glucosamine-6-phosphate deaminase (Shigella dysenteriae serotype 1 (strain Sd197)).